A 277-amino-acid chain; its full sequence is 14-3-3 protein (277 aa).

The tract at residues leucine 252–glutamine 277 is disordered. Basic and acidic residues predominate over residues glutamate 267–glutamine 277.

The protein belongs to the 14-3-3 family.

The polypeptide is 14-3-3 protein (Eimeria tenella (Coccidian parasite)).